Reading from the N-terminus, the 156-residue chain is U4/U6.U5 small nuclear ribonucleoprotein 27 kDa protein (156 aa).

The segment at 1-98 is disordered; that stretch reads MGRSRSRSPE…IAAEDLEGKT (98 aa). Residues 13–59 are compositionally biased toward basic residues; it reads RERRRSRSASRERERRRRERSRSRERRRSRSRSPHRRRSRSPRRHRS. A compositionally biased stretch (basic and acidic residues) spans 66–98; the sequence is RLKDRRDDDKKDSKESKGAKERQIAAEDLEGKT.

Belongs to the SNUT3 family. Part of a tri-snRNP complex.

The protein resides in the nucleus. In terms of biological role, may play a role in mRNA splicing. The sequence is that of U4/U6.U5 small nuclear ribonucleoprotein 27 kDa protein (snrnp27) from Xenopus tropicalis (Western clawed frog).